Here is a 239-residue protein sequence, read N- to C-terminus: Putative 3-methyladenine DNA glycosylase (239 aa).

Belongs to the DNA glycosylase MPG family.

The sequence is that of Putative 3-methyladenine DNA glycosylase from Pseudomonas aeruginosa (strain UCBPP-PA14).